Consider the following 219-residue polypeptide: Adenylate kinase (219 aa).

Residue 10-15 (GAGKGT) coordinates ATP. An NMP region spans residues 30–59 (STGDMLRAAIREGTELGLKAKSVMESGGLV). AMP-binding positions include T31, R36, 57 to 59 (GLV), 85 to 88 (GFPR), and Q92. The tract at residues 122 to 159 (GRRQHPASGRVYHIEYNPPKVEGKDDVTGEELVQRPDD) is LID. Residues R123 and 132-133 (VY) each bind ATP. Residues R156 and R167 each contribute to the AMP site. R202 contacts ATP.

Belongs to the adenylate kinase family. In terms of assembly, monomer.

It localises to the cytoplasm. The enzyme catalyses AMP + ATP = 2 ADP. The protein operates within purine metabolism; AMP biosynthesis via salvage pathway; AMP from ADP: step 1/1. Its function is as follows. Catalyzes the reversible transfer of the terminal phosphate group between ATP and AMP. Plays an important role in cellular energy homeostasis and in adenine nucleotide metabolism. This is Adenylate kinase from Acinetobacter baylyi (strain ATCC 33305 / BD413 / ADP1).